We begin with the raw amino-acid sequence, 657 residues long: tRNA 5-methylaminomethyl-2-thiouridine biosynthesis bifunctional protein MnmC (657 aa).

Positions 1 to 238 (MPASTLLQHA…KWEVMSGEYT (238 aa)) are tRNA (mnm(5)s(2)U34)-methyltransferase. The FAD-dependent cmnm(5)s(2)U34 oxidoreductase stretch occupies residues 265 to 657 (IGAGLAGSAS…FGLRRLIRGK (393 aa)).

The protein in the N-terminal section; belongs to the methyltransferase superfamily. tRNA (mnm(5)s(2)U34)-methyltransferase family. It in the C-terminal section; belongs to the DAO family. Requires FAD as cofactor.

It is found in the cytoplasm. It carries out the reaction 5-aminomethyl-2-thiouridine(34) in tRNA + S-adenosyl-L-methionine = 5-methylaminomethyl-2-thiouridine(34) in tRNA + S-adenosyl-L-homocysteine + H(+). In terms of biological role, catalyzes the last two steps in the biosynthesis of 5-methylaminomethyl-2-thiouridine (mnm(5)s(2)U) at the wobble position (U34) in tRNA. Catalyzes the FAD-dependent demodification of cmnm(5)s(2)U34 to nm(5)s(2)U34, followed by the transfer of a methyl group from S-adenosyl-L-methionine to nm(5)s(2)U34, to form mnm(5)s(2)U34. This Pseudomonas putida (strain W619) protein is tRNA 5-methylaminomethyl-2-thiouridine biosynthesis bifunctional protein MnmC.